Consider the following 209-residue polypeptide: Pyridoxal 5'-phosphate synthase subunit PdxT (209 aa).

58 to 60 (GES) is a binding site for L-glutamine. Cys90 (nucleophile) is an active-site residue. L-glutamine-binding positions include Arg119 and 148–149 (IR). Catalysis depends on charge relay system residues His185 and Glu187.

It belongs to the glutaminase PdxT/SNO family. In the presence of PdxS, forms a dodecamer of heterodimers. Only shows activity in the heterodimer.

The enzyme catalyses aldehydo-D-ribose 5-phosphate + D-glyceraldehyde 3-phosphate + L-glutamine = pyridoxal 5'-phosphate + L-glutamate + phosphate + 3 H2O + H(+). It carries out the reaction L-glutamine + H2O = L-glutamate + NH4(+). The protein operates within cofactor biosynthesis; pyridoxal 5'-phosphate biosynthesis. Catalyzes the hydrolysis of glutamine to glutamate and ammonia as part of the biosynthesis of pyridoxal 5'-phosphate. The resulting ammonia molecule is channeled to the active site of PdxS. The sequence is that of Pyridoxal 5'-phosphate synthase subunit PdxT from Clavibacter michiganensis subsp. michiganensis (strain NCPPB 382).